The chain runs to 177 residues: GTP-dependent dephospho-CoA kinase (177 aa).

GTP is bound by residues G25, Y31, D48, V49, V50, D67, K69, E124, and D147.

Belongs to the GTP-dependent DPCK family. Monomer in solution.

It carries out the reaction 3'-dephospho-CoA + GTP = GDP + CoA + H(+). It participates in cofactor biosynthesis; coenzyme A biosynthesis. In terms of biological role, catalyzes the GTP-dependent phosphorylation of the 3'-hydroxyl group of dephosphocoenzyme A to form coenzyme A (CoA). Can also use UTP, with lower efficiency and has weak activity with ATP, but shows a strong preference for GTP as the phosphate donor. The protein is GTP-dependent dephospho-CoA kinase of Thermococcus kodakarensis (strain ATCC BAA-918 / JCM 12380 / KOD1) (Pyrococcus kodakaraensis (strain KOD1)).